The sequence spans 378 residues: Succinyl-diaminopimelate desuccinylase (378 aa).

Histidine 68 contacts Zn(2+). Residue aspartate 70 is part of the active site. Aspartate 101 contacts Zn(2+). The active-site Proton acceptor is the glutamate 135. Glutamate 136, glutamate 164, and histidine 350 together coordinate Zn(2+).

It belongs to the peptidase M20A family. DapE subfamily. In terms of assembly, homodimer. Zn(2+) is required as a cofactor. Co(2+) serves as cofactor.

The enzyme catalyses N-succinyl-(2S,6S)-2,6-diaminopimelate + H2O = (2S,6S)-2,6-diaminopimelate + succinate. The protein operates within amino-acid biosynthesis; L-lysine biosynthesis via DAP pathway; LL-2,6-diaminopimelate from (S)-tetrahydrodipicolinate (succinylase route): step 3/3. Functionally, catalyzes the hydrolysis of N-succinyl-L,L-diaminopimelic acid (SDAP), forming succinate and LL-2,6-diaminopimelate (DAP), an intermediate involved in the bacterial biosynthesis of lysine and meso-diaminopimelic acid, an essential component of bacterial cell walls. This is Succinyl-diaminopimelate desuccinylase from Vibrio atlanticus (strain LGP32) (Vibrio splendidus (strain Mel32)).